Consider the following 193-residue polypeptide: RNA polymerase sigma-H factor (193 aa).

The short motif at 49-62 (DVAQEAFIKAYRAL) is the Polymerase core binding element. Residues 157–176 (YEDIATVMQCPVGTVRSRIF) constitute a DNA-binding region (H-T-H motif).

The protein belongs to the sigma-70 factor family. ECF subfamily.

Functionally, sigma factors are initiation factors that promote the attachment of RNA polymerase to specific initiation sites and are then released. This sigma factor regulates genes such as algD, involved in alginate biosynthesis. This chain is RNA polymerase sigma-H factor (algU), found in Pseudomonas aeruginosa (strain ATCC 15692 / DSM 22644 / CIP 104116 / JCM 14847 / LMG 12228 / 1C / PRS 101 / PAO1).